The primary structure comprises 472 residues: CAAX prenyl protease 1 homolog (472 aa).

The Lumenal portion of the chain corresponds to 1–8 (MDVGGALD). Residues 9–29 (LYGCSVNVYNAILIFIWVLFL) form a helical membrane-spanning segment. Topologically, residues 30–75 (WETYINLRQLKVAKRVTESPEEIKCLMNDVDFDKSRRYAIDKMNFD) are cytoplasmic. Residues 76 to 96 (IVSGFYNILSLSAVLYFQLIA) form a helical membrane-spanning segment. Residues 97-124 (WAWHKSQEHMLFVCSYAPRSFGTTEGSE) are Lumenal-facing. Residues 125-145 (ILFSLLFTVYVALFQFFESLP) form a helical membrane-spanning segment. At 146-175 (WSYYRHFVIEERYGFNKQTIGFFIKDRLKS) the chain is on the cytoplasmic side. Residues 176–196 (LAVGLVIGLPIISMLVWIIKA) traverse the membrane as a helical segment. Over 197-207 (GGHYFYIYAYG) the chain is Lumenal. The helical transmembrane segment at 208 to 228 (FTFVVSFIIMFIYPEFIAPIF) threads the bilayer. The Cytoplasmic segment spans residues 229-340 (DRYEHFPDCE…LGHWKLKHMT (112 aa)). His-329 contacts Zn(2+). The active site involves Glu-330. His-333 is a binding site for Zn(2+). The helical transmembrane segment at 341 to 361 (FNLIIAQINIFFMFFAFGQLI) threads the bilayer. At 362–382 (NVDQLFVDFGFPPSTAPILIR) the chain is on the lumenal side. Residues 383 to 403 (LIVVFQFIFMPYSSVLEFLMT) traverse the membrane as a helical segment. Residues 404-472 (MLSRKFEFQA…AIDAKMGKEK (69 aa)) are Cytoplasmic-facing. Residue Glu-410 coordinates Zn(2+). Asp-414 functions as the Proton donor in the catalytic mechanism.

It belongs to the peptidase M48A family. As to quaternary structure, homodimer; disulfide-linked. The cofactor is Zn(2+).

The protein resides in the endoplasmic reticulum membrane. The enzyme catalyses Hydrolyzes the peptide bond -P2-(S-farnesyl or geranylgeranyl)C-P1'-P2'-P3'-COOH where P1' and P2' are amino acids with aliphatic side chains and P3' is any C-terminal residue.. Its activity is regulated as follows. Inhibited by ethylenediaminetetraacetic acid (EDTA) but not by serine, aspartic or cysteine protease inhibitors. Inhibited by high concentration of Zn(2+) (&gt; 0.1 mM). Zinc-dependent metalloproteinase. Proteolytically removes the C-terminal three residues of farnesylated proteins. The sequence is that of CAAX prenyl protease 1 homolog from Taenia solium (Pork tapeworm).